The following is a 274-amino-acid chain: uncharacterized protein (274 aa).

A signal peptide spans 1 to 30; the sequence is MTIDTPAREDQTLAATHRAMWALGDYALMA.

The protein to M.tuberculosis Rv1403c.

This is an uncharacterized protein from Mycobacterium bovis (strain ATCC BAA-935 / AF2122/97).